The chain runs to 943 residues: Synaptotagmin-like protein 2 (943 aa).

The 57-residue stretch at 1–57 folds into the RabBD domain; the sequence is MIDLSFLTEEEQEAIMKVLQRDAALKRAEEERVRHLPEKVKDDQQLKNMSGQWFYEA. 3 disordered regions span residues 77–99, 118–291, and 361–613; these read RKKR…KESW, EEPE…VRFH, and ESDR…SNSG. Residues 82 to 99 are compositionally biased toward basic and acidic residues; the sequence is QVADEQSKDRANRAKESW. The span at 125-138 shows a compositional bias: low complexity; sequence APASPSSSVVNPVS. Residues 174–192 show a composition bias toward polar residues; sequence SQQTKNEQSKNGKTGLFQT. The span at 194–205 shows a compositional bias: basic and acidic residues; the sequence is KEGELSESKEES. Polar residues-rich tracts occupy residues 382–394, 404–416, and 426–440; these read PQPS…LPFQ, KNET…SGSF, and EFLT…NSHT. A compositionally biased stretch (basic and acidic residues) spans 524–537; it reads ELVRSAEDDQKADQ. A compositionally biased stretch (polar residues) spans 549 to 560; that stretch reads STVSSQPDNQFS. Positions 603–613 are enriched in low complexity; it reads SSLTNLSSNSG. 2 C2 domains span residues 637–762 and 777–906; these read VKGS…LKWY and NRGE…VDWM.

Monomer. Binds NRXN1. Binds RAB27A that has been activated by GTP-binding via its N-terminus. Interacts with RAB27B.

Its subcellular location is the cell membrane. In terms of biological role, may act as a RAB27A effector protein and play a role in cytotoxic granule exocytosis in lymphocytes. The protein is Synaptotagmin-like protein 2 (SYTL2) of Bos taurus (Bovine).